Reading from the N-terminus, the 507-residue chain is ATP synthase subunit alpha, plastid (507 aa).

170–177 (GDRQTGKT) provides a ligand contact to ATP.

This sequence belongs to the ATPase alpha/beta chains family. As to quaternary structure, F-type ATPases have 2 components, CF(1) - the catalytic core - and CF(0) - the membrane proton channel. CF(1) has five subunits: alpha(3), beta(3), gamma(1), delta(1), epsilon(1). CF(0) has four main subunits: a, b, b' and c.

The protein localises to the plastid membrane. The enzyme catalyses ATP + H2O + 4 H(+)(in) = ADP + phosphate + 5 H(+)(out). In terms of biological role, produces ATP from ADP in the presence of a proton gradient across the membrane. The alpha chain is a regulatory subunit. The polypeptide is ATP synthase subunit alpha, plastid (Cuscuta obtusiflora (Peruvian dodder)).